A 157-amino-acid polypeptide reads, in one-letter code: Acetyltransferase PseH (157 aa).

The N-acetyltransferase domain occupies 5–152; it reads KNFAELNSQE…YYVCLKQSHC (148 aa).

In terms of biological role, catalyzes the third step in the biosynthesis of pseudaminic acid, a sialic-acid-like sugar that is used to modify flagellin. Mediates N-4 acetylation of UDP-4-amino-4,6-dideoxy-beta-L-AltNAc to form UDP-2,4-diacetamido-2,4,6-trideoxy-beta-L-altropyranose. This is Acetyltransferase PseH (pseH) from Campylobacter jejuni subsp. jejuni serotype O:2 (strain ATCC 700819 / NCTC 11168).